A 244-amino-acid polypeptide reads, in one-letter code: Orotidine 5'-phosphate decarboxylase (244 aa).

Substrate-binding positions include aspartate 14, lysine 36, 63–72 (DLKFHDIPNT), threonine 127, arginine 188, glutamine 197, glycine 217, and arginine 218. Lysine 65 (proton donor) is an active-site residue.

The protein belongs to the OMP decarboxylase family. Type 1 subfamily. In terms of assembly, homodimer.

The catalysed reaction is orotidine 5'-phosphate + H(+) = UMP + CO2. It functions in the pathway pyrimidine metabolism; UMP biosynthesis via de novo pathway; UMP from orotate: step 2/2. In terms of biological role, catalyzes the decarboxylation of orotidine 5'-monophosphate (OMP) to uridine 5'-monophosphate (UMP). This is Orotidine 5'-phosphate decarboxylase from Syntrophotalea carbinolica (strain DSM 2380 / NBRC 103641 / GraBd1) (Pelobacter carbinolicus).